The sequence spans 1374 residues: F-actin-uncapping protein LRRC16A (1374 aa).

Residue Met-1 is modified to N-acetylmethionine. At Ser-122 the chain carries Phosphoserine. LRR repeat units lie at residues 245 to 269 (SNRL…LAGA), 275 to 298 (NSGL…SLSI), 304 to 327 (PKGL…SLCQ), 336 to 363 (ASTL…FLAQ), 391 to 418 (LQCL…SFKQ), 423 to 447 (SLAL…LLLG), 485 to 510 (IHNI…VWLS), 547 to 570 (DSPL…IINA), 574 to 597 (NTSL…MLAK), and 658 to 682 (LQKI…AYRL). Positions 714–738 (GDAIQEDLKAAERLMRDAKNSKTLL) form a coiled coil. Thr-920 is subject to Phosphothreonine. Disordered stretches follow at residues 961-982 (PFPS…PSEE) and 1040-1374 (KMDC…FIFV). The LRR 11 repeat unit spans residues 962–985 (FPSVRQEKRSSGLISELPSEEGRR). The inhibits capping activity of CP stretch occupies residues 962 to 1084 (FPSVRQEKRS…LIKSRSRSER (123 aa)). Ser-972 bears the Phosphoserine mark. A compositionally biased stretch (basic and acidic residues) spans 1040 to 1064 (KMDCKRSSSRSSDAHELGEGDEKKK). A necessary for localization at the cell membrane region spans residues 1058–1092 (EGDEKKKRDSRRSGFLNLIKSRSRSERPPTVLMTE). Ser-1096 is modified (phosphoserine). Composition is skewed to basic and acidic residues over residues 1108–1132 (TTRK…KTPE) and 1141–1150 (EAGRAERSDS). Polar residues predominate over residues 1191-1204 (VISQDPSSPVSCNT). The residue at position 1229 (Thr-1229) is a Phosphothreonine. Basic and acidic residues predominate over residues 1232–1244 (KNAKAEPRVDGGC). The span at 1245–1263 (RSRSSSSMPTSPKPLLQSP) shows a compositional bias: low complexity. Phosphoserine occurs at positions 1281, 1289, 1291, 1295, 1319, 1328, and 1335. Residues 1317 to 1330 (QNSSQSSPRSFSQE) show a composition bias toward low complexity. Positions 1343-1356 (QEQKQRSSGKDGHQ) are enriched in basic and acidic residues. Ser-1363 carries the phosphoserine modification.

This sequence belongs to the CARMIL family. Homodimer. Interacts (via C-terminus) with heterodimeric capping protein (CP); this interaction uncaps barbed ends capped by CP, enhances barbed-end actin polymerization and promotes lamellipodial formation and cell migration. Interacts with MYO1E. Interacts with TRIO.

The protein resides in the cytoplasm. It is found in the cytoskeleton. It localises to the cell membrane. Its subcellular location is the cell projection. The protein localises to the lamellipodium. In terms of biological role, cell membrane-cytoskeleton-associated protein that plays a role in the regulation of actin polymerization at the barbed end of actin filaments. Prevents F-actin heterodimeric capping protein (CP) activity at the leading edges of migrating cells, and hence generates uncapped barbed ends and enhances actin polymerization, however, seems unable to nucleate filaments. Plays a role in lamellipodial protrusion formations and cell migration. This is F-actin-uncapping protein LRRC16A from Mus musculus (Mouse).